A 109-amino-acid chain; its full sequence is Ribulose bisphosphate carboxylase small subunit (109 aa).

This sequence belongs to the RuBisCO small chain family. Heterohexadecamer of 8 large and 8 small subunits. Forms complexes of many stoichiometries with Raf1 and RbcL.

It is found in the carboxysome. Its function is as follows. RuBisCO catalyzes two reactions: the carboxylation of D-ribulose 1,5-bisphosphate, the primary event in carbon dioxide fixation, as well as the oxidative fragmentation of the pentose substrate in the photorespiration process. Both reactions occur simultaneously and in competition at the same active site. Although the small subunit is not catalytic it is essential for maximal activity. This chain is Ribulose bisphosphate carboxylase small subunit, found in Nostoc sp. (strain PCC 7120 / SAG 25.82 / UTEX 2576).